Reading from the N-terminus, the 61-residue chain is MAEQKKIRVTLVKSLIGTIESHRACARGLGLRRREHTVEVLDTPENRGMINKISYLLKVES.

Belongs to the universal ribosomal protein uL30 family. Part of the 50S ribosomal subunit.

The chain is Large ribosomal subunit protein uL30 from Neisseria meningitidis serogroup C (strain 053442).